A 139-amino-acid polypeptide reads, in one-letter code: Small ribosomal subunit protein uS12 (139 aa).

The tract at residues 1–21 (MSTVSQLIKKRRSSKTSKTKA) is disordered. Residues 8-18 (IKKRRSSKTSK) are compositionally biased toward basic residues.

Belongs to the universal ribosomal protein uS12 family. As to quaternary structure, part of the 30S ribosomal subunit. Contacts proteins S8 and S17. May interact with IF1 in the 30S initiation complex.

With S4 and S5 plays an important role in translational accuracy. Its function is as follows. Interacts with and stabilizes bases of the 16S rRNA that are involved in tRNA selection in the A site and with the mRNA backbone. Located at the interface of the 30S and 50S subunits, it traverses the body of the 30S subunit contacting proteins on the other side and probably holding the rRNA structure together. The combined cluster of proteins S8, S12 and S17 appears to hold together the shoulder and platform of the 30S subunit. The protein is Small ribosomal subunit protein uS12 of Onion yellows phytoplasma (strain OY-M).